A 642-amino-acid chain; its full sequence is Zinc finger protein 14 (642 aa).

The 73-residue stretch at 4–76 (VSFEDVAVNF…MVERLCESRR (73 aa)) folds into the KRAB domain. The C2H2-type 1 zinc finger occupies 103-125 (HECSFCGRDFIHHSSLNRHMRSH). The C2H2-type 2; degenerate zinc-finger motif lies at 141–163 (CKCKAVGKTFSYHHCFRKHERTH). The C2H2-type 3 zinc finger occupies 169-191 (YECKQCGKAFIYYQPFQRHERTH). The C2H2-type 4; atypical zinc finger occupies 197–217 (YECKQCGKTFIYYQSFQKHAH). 15 consecutive C2H2-type zinc fingers follow at residues 223-245 (YECK…KRTH), 251-273 (YECK…ERTH), 279-301 (YKCK…KRTH), 307-329 (YECK…VIIH), 335-357 (YKCK…ERTH), 363-385 (YECK…ERTH), 391-413 (YECK…ETTH), 419-441 (YECK…ERTH), 447-469 (YECK…ERSH), 475-497 (YECK…ERTH), 503-525 (YECK…EKIH), 531-553 (FECK…ERTH), 559-581 (YQCK…ERTH), 587-609 (YRCK…ERSH), and 615-637 (YECK…ERTH).

It belongs to the krueppel C2H2-type zinc-finger protein family.

The protein localises to the nucleus. Its function is as follows. May be involved in transcriptional regulation. This Homo sapiens (Human) protein is Zinc finger protein 14 (ZNF14).